The following is a 50-amino-acid chain: Protein PsbN (50 aa).

The helical transmembrane segment at 14 to 34 threads the bilayer; that stretch reads VAVTILAVLLALTGFGLWTAF.

It belongs to the PsbN family.

It is found in the cellular thylakoid membrane. Functionally, may play a role in photosystem I and II biogenesis. This is Protein PsbN from Prochlorococcus marinus subsp. pastoris (strain CCMP1986 / NIES-2087 / MED4).